Here is a 163-residue protein sequence, read N- to C-terminus: Crossover junction endodeoxyribonuclease RuvC (163 aa).

Residues Asp-7, Glu-67, and Asp-140 contribute to the active site. Mg(2+)-binding residues include Asp-7, Glu-67, and Asp-140.

It belongs to the RuvC family. In terms of assembly, homodimer which binds Holliday junction (HJ) DNA. The HJ becomes 2-fold symmetrical on binding to RuvC with unstacked arms; it has a different conformation from HJ DNA in complex with RuvA. In the full resolvosome a probable DNA-RuvA(4)-RuvB(12)-RuvC(2) complex forms which resolves the HJ. Mg(2+) is required as a cofactor.

The protein resides in the cytoplasm. The enzyme catalyses Endonucleolytic cleavage at a junction such as a reciprocal single-stranded crossover between two homologous DNA duplexes (Holliday junction).. Its function is as follows. The RuvA-RuvB-RuvC complex processes Holliday junction (HJ) DNA during genetic recombination and DNA repair. Endonuclease that resolves HJ intermediates. Cleaves cruciform DNA by making single-stranded nicks across the HJ at symmetrical positions within the homologous arms, yielding a 5'-phosphate and a 3'-hydroxyl group; requires a central core of homology in the junction. The consensus cleavage sequence is 5'-(A/T)TT(C/G)-3'. Cleavage occurs on the 3'-side of the TT dinucleotide at the point of strand exchange. HJ branch migration catalyzed by RuvA-RuvB allows RuvC to scan DNA until it finds its consensus sequence, where it cleaves and resolves the cruciform DNA. This is Crossover junction endodeoxyribonuclease RuvC from Petrotoga mobilis (strain DSM 10674 / SJ95).